The sequence spans 77 residues: U8-lycotoxin-Ls1s (77 aa).

The first 20 residues, 1-20, serve as a signal peptide directing secretion; the sequence is MKLIIFTGLVLFAIVSLIEA. The propeptide occupies 21 to 26; the sequence is QAENER.

It belongs to the neurotoxin 19 (CSTX) family. 08 (U8-Lctx) subfamily. In terms of processing, contains 4 disulfide bonds. In terms of tissue distribution, expressed by the venom gland.

The protein localises to the secreted. The protein is U8-lycotoxin-Ls1s of Lycosa singoriensis (Wolf spider).